Here is a 166-residue protein sequence, read N- to C-terminus: uncharacterized protein (166 aa).

This is an uncharacterized protein from Homo sapiens (Human).